Here is a 586-residue protein sequence, read N- to C-terminus: Proton channel OTOP1 (586 aa).

Residues 1 to 52 (MVEHGGTDSMWLNKYNPAAASSASSSSSSDAENKLFSRLKVSLTKKYPQKNA) are Cytoplasmic-facing. A helical transmembrane segment spans residues 53 to 74 (ELLSAQYGTNLLLLGVSVMLAL). Over 75-82 (AAQSGPVK) the chain is Extracellular. The helical transmembrane segment at 83-106 (EEHLLSFITVLMLVQLVWMLCYMI) threads the bilayer. The Cytoplasmic portion of the chain corresponds to 107–124 (RRERERSPVPERDAHAGA). The chain crosses the membrane as a helical span at residues 125-147 (SWIRGGLTMLALLSLIMDAFRIG). Topologically, residues 148-157 (YFVGYHSCIS) are extracellular. A helical transmembrane segment spans residues 158 to 182 (AALGVYPIVHALHTISQVHFLWFHI). Topologically, residues 183–190 (KDVIKKYE) are cytoplasmic. A helical membrane pass occupies residues 191–217 (TFERFGVIHAVFTNLLLWCNGVMSETE). Topologically, residues 218–255 (HFMHNHRRRLIEMGYANLSTVDVQPHCNCTTSVCSMFS) are extracellular. The chain crosses the membrane as a helical span at residues 256–281 (TSLYYLYPFNIEYHIFVSAMLFVMWK). At 282–303 (NIGRTLDRHSNRKRRSTGSTGL) the chain is on the cytoplasmic side. The helical transmembrane segment at 304–326 (LLGPLGGLVALASSVSVLVVYLI) threads the bilayer. Residues 327-336 (HLEKTEEMHE) lie on the Extracellular side of the membrane. A helical transmembrane segment spans residues 337 to 362 (AAVSMFYYYGVAMMACMCVGSGTGLL). The Cytoplasmic portion of the chain corresponds to 363-380 (VYRMENRPMDTGSNPART). Residues 381–405 (LDTELLLASSLGSWLMSWCSVVASV) form a helical membrane-spanning segment. Topologically, residues 406-417 (AEAGQKSPSFSW) are extracellular. Residues 418 to 438 (TSLTYSLLLVLEKCIQNLFIV) form a helical membrane-spanning segment. At 439–518 (ESLYRRHSEE…TPGRKRQILK (80 aa)) the chain is on the cytoplasmic side. Residues 484–505 (PAAGSHALSRKQPDAPLPAGQR) are disordered. A helical membrane pass occupies residues 519 to 537 (NICMFLFMCNISLWILPAF). At 538-555 (GCRPQYDNPLENETFGTS) the chain is on the extracellular side. Residues 556–579 (VWTTVLNVAIPLNLFYRMHSVASL) form a helical membrane-spanning segment. Residues 580-586 (FEVFRKV) are Cytoplasmic-facing.

This sequence belongs to the otopetrin family. As to quaternary structure, homodimer.

It is found in the cell membrane. It localises to the cell projection. The protein resides in the microvillus. The enzyme catalyses H(+)(in) = H(+)(out). Its activity is regulated as follows. Activated by both acid and alkali, with proton influx in response to extracellular acid and proton efflux during alkali stimulation. Inhibited by Zn(2+); this inhibition is thought to be pH-sensitive. Currents evoked in response to mild acid (pH 6.0) stimulus may also be mildly potentiated by exposure to Zn(2+). Activated by NH(4)Cl. Proton-selective ion channel. Biphasically modulated by acid and alkali, mediating proton influx and efflux in response to extracellular acid and base stimulation, respectively. May be involved in acid and base perception. Sensor for ammonium chloride (NH(4)Cl) in taste receptor cells. NH(4)Cl acts by increasing the intracellular pH, thereby generating a driving force for proton entry through OTOP1 channel. Plays a role in the regulation of Ca(2+) flux in response to purigenic (ATP, ADP and UDP) stimuli, leading to increase in cytosolic Ca(2+) due to influx of extracellular calcium. May play this role by inhibiting P2Y purinoceptor-mediated Ca(2+) release in a Ca(2+)-dependent manner and promote an influx of Ca(2+) in response to ATP. Through this mechanism and possibly others, plays a role in the formation and function of calcium carbonate-based structures in the vestibular system of the inner ear, called otoconia, that sense gravity and linear acceleration. The protein is Proton channel OTOP1 of Danio rerio (Zebrafish).